A 479-amino-acid chain; its full sequence is Glucagon receptor (479 aa).

Positions 1 to 25 (MPPARLRHPHLLLLLLLACQPQAPA) are cleaved as a signal peptide. Residues 26-136 (AQAMDFLFQK…ELGVQREVAE (111 aa)) lie on the Extracellular side of the membrane. 3 cysteine pairs are disulfide-bonded: cysteine 43/cysteine 67, cysteine 58/cysteine 100, and cysteine 81/cysteine 121. Asparagine 46, asparagine 59, asparagine 74, asparagine 78, and asparagine 117 each carry an N-linked (GlcNAc...) asparagine glycan. A helical membrane pass occupies residues 137–161 (MYSSFQAMYTAGYSLSLAALLLALA). Topologically, residues 162–173 (ILLGLSKLHCTR) are cytoplasmic. The helical transmembrane segment at 174-198 (NYIHANLLASFVLRASSVLALDALL) threads the bilayer. Residues 199–225 (KTRYSQRLGDDLSVSIWLSDEAVAGCR) lie on the Extracellular side of the membrane. Residues cysteine 224 and cysteine 294 are joined by a disulfide bond. The chain crosses the membrane as a helical span at residues 226-249 (VAAVFMQYGVVANYCWLLVEGVYL). At 250-263 (HSLLRQATIPERSC) the chain is on the cytoplasmic side. Residues 264–285 (FPLYLAIGWGAPMLFVIPWAVV) traverse the membrane as a helical segment. Topologically, residues 286-303 (KCLFENIQCWTSNDNMGF) are extracellular. Residues 304–326 (WWILRFPVFLAILINFSIFIRVL) form a helical membrane-spanning segment. The Cytoplasmic segment spans residues 327–350 (HVLVAKLRAHQMRCTDYKFRLARS). The helical transmembrane segment at 351-369 (TLTLIPLLGVHEVVFAFVT) threads the bilayer. Residues 370–381 (DEHAQGALRSAK) are Extracellular-facing. A helical transmembrane segment spans residues 382 to 402 (LFFDLFLSSFQGLLVAVLYCF). The Cytoplasmic portion of the chain corresponds to 403–479 (LNKEVQAELL…GLPGVAENPF (77 aa)). Residues 426 to 479 (KAHRVGSHSARPPSGPPSEKLLLSTGGSSNGTSQEPSAETHLASGLPGVAENPF) form a disordered region. Residues 446–458 (LLLSTGGSSNGTS) show a composition bias toward low complexity. A Phosphoserine modification is found at serine 458.

The protein belongs to the G-protein coupled receptor 2 family. Post-translationally, ligand-binding promotes phosphorylation of serine residues in the C-terminal cytoplasmic domain. Phosphorylation is important for receptor endocytosis after ligand-binding.

Its subcellular location is the cell membrane. Its function is as follows. G-protein coupled receptor for glucagon that plays a central role in the regulation of blood glucose levels and glucose homeostasis. Regulates the rate of hepatic glucose production by promoting glycogen hydrolysis and gluconeogenesis. Plays an important role in mediating the responses to fasting. Ligand binding causes a conformation change that triggers signaling via guanine nucleotide-binding proteins (G proteins) and modulates the activity of down-stream effectors, such as adenylate cyclase. Promotes activation of adenylate cyclase. Besides, plays a role in signaling via a phosphatidylinositol-calcium second messenger system. The polypeptide is Glucagon receptor (Sus scrofa (Pig)).